We begin with the raw amino-acid sequence, 517 residues long: MKNFNALSRLSILSKQLSFNNTNSSIARGDIGLIGLAVMGQNLILNMADHGYTVVAYNRTTAKVDRFLENEAKGKSILGAHSIKELVDQLKRPRRIMLLVKAGAPVDEFINQLLPYLEEGDIIIDGGNSHFPDSNRRYEELAKKGILFVGSGVSGGEEGARTGPSLMPGGNEKAWPHIKEIFQDVAAKSDGEPCCDWVGDAGAGHYVKMVHNGIEYGDMQLICEAYDLMKRVGKFEDKEIGDVFATWNKGVLDSFLIEITRDILYYNDPTDGKPLVEKILDTAGQKGTGKWTAVNALDLGIPVTLIGEAVFSRCLSAMKAERVEASKALKGPQVTGESPITDKKQFIDDLEQALYASKIISYTQGFMLMNQAAKDYGWKLNNAGIALMWRGGCIIRSVFLAEITAAYRKKPDLENLLLYPFFNDAITKAQSGWRASVGKAIQYGIPTPAFSTALAFYDGLRSERLPANLLQAQRDYFGAHTFKVLPGQENELLKKDEWIHINWTGRGGDVSSTTYDA.

Residues Gly-35–Gly-40, Asn-58–Thr-60, Val-100–Ala-102, and Asn-128 contribute to the NADP(+) site. Substrate is bound by residues Asn-128 and Ser-154 to Gly-156. Residue Lys-208 is the Proton acceptor of the active site. His-211–Asn-212 contributes to the substrate binding site. The active-site Proton donor is the Glu-215. Substrate is bound by residues Tyr-216, Lys-286, Arg-313, Arg-474, and His-480.

It belongs to the 6-phosphogluconate dehydrogenase family. Homodimer.

It carries out the reaction 6-phospho-D-gluconate + NADP(+) = D-ribulose 5-phosphate + CO2 + NADPH. It participates in carbohydrate degradation; pentose phosphate pathway; D-ribulose 5-phosphate from D-glucose 6-phosphate (oxidative stage): step 3/3. Catalyzes the oxidative decarboxylation of 6-phosphogluconate to ribulose 5-phosphate and CO(2), with concomitant reduction of NADP to NADPH. This Candida albicans (Yeast) protein is 6-phosphogluconate dehydrogenase, decarboxylating (DOR14).